The following is a 141-amino-acid chain: Large ribosomal subunit protein uL11 (141 aa).

The protein belongs to the universal ribosomal protein uL11 family. As to quaternary structure, part of the ribosomal stalk of the 50S ribosomal subunit. Interacts with L10 and the large rRNA to form the base of the stalk. L10 forms an elongated spine to which L12 dimers bind in a sequential fashion forming a multimeric L10(L12)X complex. In terms of processing, one or more lysine residues are methylated.

In terms of biological role, forms part of the ribosomal stalk which helps the ribosome interact with GTP-bound translation factors. The protein is Large ribosomal subunit protein uL11 of Chlamydia abortus (strain DSM 27085 / S26/3) (Chlamydophila abortus).